The following is a 60-amino-acid chain: Cytochrome c oxidase subunit 9, mitochondrial (60 aa).

Residues 1–15 (MSALAPITGTLKKRI) are Mitochondrial matrix-facing. A helical transmembrane segment spans residues 16 to 38 (ITDIVIGFSLGGVMASYWWWGFH). Topologically, residues 39–57 (KNVIDRREAFYADLAEKKK) are mitochondrial intermembrane. Positions 58–60 (AEN) are cleaved as a propeptide — removed in mature form.

The protein belongs to the fungal cytochrome c oxidase subunit 7a family. Component of the cytochrome c oxidase (complex IV, CIV), a multisubunit enzyme composed of a catalytic core of 3 subunits and several supernumerary subunits. The complex exists as a monomer or a dimer and forms supercomplexes (SCs) in the inner mitochondrial membrane with ubiquinol-cytochrome c oxidoreductase (cytochrome b-c1 complex, complex III, CIII).

The protein resides in the mitochondrion inner membrane. It participates in energy metabolism; oxidative phosphorylation. In terms of biological role, component of the cytochrome c oxidase, the last enzyme in the mitochondrial electron transport chain which drives oxidative phosphorylation. The respiratory chain contains 3 multisubunit complexes succinate dehydrogenase (complex II, CII), ubiquinol-cytochrome c oxidoreductase (cytochrome b-c1 complex, complex III, CIII) and cytochrome c oxidase (complex IV, CIV), that cooperate to transfer electrons derived from NADH and succinate to molecular oxygen, creating an electrochemical gradient over the inner membrane that drives transmembrane transport and the ATP synthase. Cytochrome c oxidase is the component of the respiratory chain that catalyzes the reduction of oxygen to water. Electrons originating from reduced cytochrome c in the intermembrane space (IMS) are transferred via the dinuclear copper A center (CU(A)) of subunit 2 and heme A of subunit 1 to the active site in subunit 1, a binuclear center (BNC) formed by heme A3 and copper B (CU(B)). The BNC reduces molecular oxygen to 2 water molecules using 4 electrons from cytochrome c in the IMS and 4 protons from the mitochondrial matrix. The chain is Cytochrome c oxidase subunit 9, mitochondrial (COX9) from Candida glabrata (strain ATCC 2001 / BCRC 20586 / JCM 3761 / NBRC 0622 / NRRL Y-65 / CBS 138) (Yeast).